The primary structure comprises 211 residues: Protein-L-isoaspartate O-methyltransferase (211 aa).

Serine 60 is a catalytic residue.

The protein belongs to the methyltransferase superfamily. L-isoaspartyl/D-aspartyl protein methyltransferase family.

Its subcellular location is the cytoplasm. It catalyses the reaction [protein]-L-isoaspartate + S-adenosyl-L-methionine = [protein]-L-isoaspartate alpha-methyl ester + S-adenosyl-L-homocysteine. In terms of biological role, catalyzes the methyl esterification of L-isoaspartyl residues in peptides and proteins that result from spontaneous decomposition of normal L-aspartyl and L-asparaginyl residues. It plays a role in the repair and/or degradation of damaged proteins. This Pseudomonas fluorescens (strain ATCC BAA-477 / NRRL B-23932 / Pf-5) protein is Protein-L-isoaspartate O-methyltransferase.